The chain runs to 57 residues: Large ribosomal subunit protein uL30 (57 aa).

It belongs to the universal ribosomal protein uL30 family. Part of the 50S ribosomal subunit.

The protein is Large ribosomal subunit protein uL30 of Maridesulfovibrio salexigens (strain ATCC 14822 / DSM 2638 / NCIMB 8403 / VKM B-1763) (Desulfovibrio salexigens).